We begin with the raw amino-acid sequence, 211 residues long: Histidine biosynthesis bifunctional protein HisIE (211 aa).

Residues 1–107 (MNKLIDFSKG…FNSEIESRFK (107 aa)) form a phosphoribosyl-AMP cyclohydrolase region. The interval 108–211 (IQALAQTIHQ…KGERKKVQEW (104 aa)) is phosphoribosyl-ATP pyrophosphohydrolase.

The protein in the N-terminal section; belongs to the PRA-CH family. This sequence in the C-terminal section; belongs to the PRA-PH family.

It localises to the cytoplasm. The enzyme catalyses 1-(5-phospho-beta-D-ribosyl)-ATP + H2O = 1-(5-phospho-beta-D-ribosyl)-5'-AMP + diphosphate + H(+). It catalyses the reaction 1-(5-phospho-beta-D-ribosyl)-5'-AMP + H2O = 1-(5-phospho-beta-D-ribosyl)-5-[(5-phospho-beta-D-ribosylamino)methylideneamino]imidazole-4-carboxamide. It participates in amino-acid biosynthesis; L-histidine biosynthesis; L-histidine from 5-phospho-alpha-D-ribose 1-diphosphate: step 2/9. The protein operates within amino-acid biosynthesis; L-histidine biosynthesis; L-histidine from 5-phospho-alpha-D-ribose 1-diphosphate: step 3/9. The chain is Histidine biosynthesis bifunctional protein HisIE from Staphylococcus epidermidis (strain ATCC 12228 / FDA PCI 1200).